Consider the following 407-residue polypeptide: Peptidase T (407 aa).

His-81 serves as a coordination point for Zn(2+). Asp-83 is an active-site residue. Residue Asp-142 participates in Zn(2+) binding. Glu-176 (proton acceptor) is an active-site residue. Zn(2+)-binding residues include Glu-177, Asp-199, and His-381.

This sequence belongs to the peptidase M20B family. Requires Zn(2+) as cofactor.

The protein resides in the cytoplasm. It catalyses the reaction Release of the N-terminal residue from a tripeptide.. In terms of biological role, cleaves the N-terminal amino acid of tripeptides. The chain is Peptidase T from Streptococcus pneumoniae (strain ATCC 700669 / Spain 23F-1).